A 904-amino-acid chain; its full sequence is MICAL-like protein 2 (904 aa).

The Calponin-homology (CH) domain occupies 1 to 107 (MAAIRALQQW…YVSQYYNYFH (107 aa)). Positions 1–260 (MAAIRALQQW…KLTGLVPRQP (260 aa)) are forms an intramolecular interaction with the C-terminal coiled coil domain keeping the protein in a closed conformation. Residues serine 110, serine 143, and serine 153 each carry the phosphoserine modification. The disordered stretch occupies residues 117–178 (GVKRASEDSE…GGPPPKTDQA (62 aa)). Over residues 143–153 (SPAPARKPPLS) the composition is skewed to pro residues. The 63-residue stretch at 186–248 (STCGVCGKHV…TSHLPAAASA (63 aa)) folds into the LIM zinc-binding domain. Position 249 is a phosphoserine (serine 249). A disordered region spans residues 251–722 (KLTGLVPRQP…PANVPALPGE (472 aa)). Positions 261–388 (GAMGVDSRTS…GGAPRVAAPQ (128 aa)) are necessary and sufficient for interaction with actinins. Residues 261-697 (GAMGVDSRTS…EARVQSWKEE (437 aa)) are mediates targeting to the cell plasma membrane. Residues 267 to 277 (SRTSCSPQKAQ) show a composition bias toward polar residues. Low complexity-rich tracts occupy residues 293-314 (NSPA…ATSV) and 349-362 (SSAA…ASHP). Serine 294 bears the Phosphoserine mark. Residues 363–374 (AVPPSAPDPRPA) are compositionally biased toward pro residues. Positions 385–400 (AAPQTTLSSSSTSAAT) are enriched in low complexity. Positions 408–433 (PSASRTQQARNKFFQTSAVPPGTSLS) are enriched in polar residues. Positions 459–480 (ALSALEEAGAPAPGRPSPATAA) are enriched in low complexity. Serine 494 and serine 504 each carry phosphoserine. 2 stretches are compositionally biased toward low complexity: residues 520–534 (LSTS…LPPA) and 542–553 (SSGVGRVGAGSR). The span at 564 to 578 (KSTTLTQDMSTSLQE) shows a compositional bias: polar residues. The span at 593 to 622 (PVDRRSPAERTLKPKEPRALAEPRAGEAPR) shows a compositional bias: basic and acidic residues. Serine 598 is modified (phosphoserine). Threonine 644 bears the Phosphothreonine mark. Positions 647–661 (PASPGPSLPARSPSP) are enriched in pro residues. Phosphoserine occurs at positions 649, 658, 660, and 726. The forms an intramolecular interaction with the N-terminal Calponin-homology and LIM zinc-binding domains-containing region keeping the protein in a closed conformation stretch occupies residues 698–807 (EKKPHLQGKP…LMYKSKAQRL (110 aa)). The bMERB domain occupies 723-874 (TVTSPVRLHP…EQEEDQMLRD (152 aa)). Positions 735–771 (LSPEEIQRQLQDIERRLDALELRGVELEKRLRAAEGD) form a coiled coil. Residues 807 to 903 (LEEQQLDIEG…WSPKSKSSPS (97 aa)) are mediates interaction with RAB13 and is required for transition from the closed to the opened conformation.

As to quaternary structure, interacts with RAB13 (GTP-bound form); competes with RAB8A and is involved in tight junctions assembly. Interacts with RAB8A; competes with RAB13 and is involved in E-cadherin endocytic recycling. Interacts with RAB8B. Interacts (preferentially in opened conformation) with ACTN1 and ACTN4; stimulated by RAB13 activation. Interacts (via calponin-homology (CH) domain) with the filamins FLNA, FLNB and FLNC (via actin-binding domain).

It is found in the cell membrane. It localises to the cell junction. The protein resides in the tight junction. Its subcellular location is the recycling endosome. The protein localises to the cell projection. It is found in the cytoplasm. It localises to the cytoskeleton. Functionally, effector of small Rab GTPases which is involved in junctional complexes assembly through the regulation of cell adhesion molecules transport to the plasma membrane and actin cytoskeleton reorganization. Regulates the endocytic recycling of occludins, claudins and E-cadherin to the plasma membrane and may thereby regulate the establishment of tight junctions and adherens junctions. In parallel, may regulate actin cytoskeleton reorganization directly through interaction with F-actin or indirectly through actinins and filamins. Most probably involved in the processes of epithelial cell differentiation, cell spreading and neurite outgrowth. Undergoes liquid-liquid phase separation to form tubular recycling endosomes. Plays 2 sequential roles in the biogenesis of tubular recycling endosomes: first organizes phase separation and then the closed form formed by interaction with RAB8A promotes endosomal tubulation. The sequence is that of MICAL-like protein 2 from Homo sapiens (Human).